The primary structure comprises 150 residues: Endoribonuclease YbeY (150 aa).

Positions 112, 116, and 122 each coordinate Zn(2+).

The protein belongs to the endoribonuclease YbeY family. Zn(2+) serves as cofactor.

The protein localises to the cytoplasm. Single strand-specific metallo-endoribonuclease involved in late-stage 70S ribosome quality control and in maturation of the 3' terminus of the 16S rRNA. The polypeptide is Endoribonuclease YbeY (Bdellovibrio bacteriovorus (strain ATCC 15356 / DSM 50701 / NCIMB 9529 / HD100)).